A 217-amino-acid chain; its full sequence is MGGRVDHEYSYLFKMVLIGDSGVGKSNILSRFTRNHFSLDSKSTIGVEFATKSLQMEGKTIKAQIWDTAGQERYRAITSAYYRGAVGALLVYDITKRQSFDNVHRWLRELRDHADSSIVIMMVGNKSDLIHLRAVSEDEGKALAEKEGLFFLETSAMEAVNVEEAFQTIITEVYGIVNRKALAAKEAAAASAPLPSQGKTISIDSAAGNTKRACCSA.

GTP is bound by residues 19 to 26, 67 to 71, and 125 to 128; these read GDSGVGKS, DTAGQ, and NKSD. Residues cysteine 214 and cysteine 215 are each lipidated (S-geranylgeranyl cysteine).

The protein belongs to the small GTPase superfamily. Rab family.

The protein localises to the cell membrane. This Oryza sativa subsp. japonica (Rice) protein is Ras-related protein RGP2 (RGP2).